The primary structure comprises 327 residues: Solute-binding protein SPO1773 (327 aa).

A signal peptide spans 1–26 (MTISFKGLARGVACAALVLAALPAAA). Residues 39 to 41 (HTW), Arg150, 170 to 172 (RIT), and Asp211 contribute to the 3-hydroxybenzoate site.

It belongs to the bacterial solute-binding protein 7 family. In terms of assembly, the complex is comprised of an extracytoplasmic solute-binding protein and a heteromeric permease formed by two transmembrane proteins.

The protein localises to the periplasm. Solute-binding protein that binds 3,4-dihydroxybenzoate and 3-hydroxybenzoate (in vitro). Probably part of a tripartite ATP-independent periplasmic (TRAP) transport system that mediates solute transport into the cytoplasm. In Ruegeria pomeroyi (strain ATCC 700808 / DSM 15171 / DSS-3) (Silicibacter pomeroyi), this protein is Solute-binding protein SPO1773.